The chain runs to 211 residues: Large ribosomal subunit protein eL13 (211 aa).

An N6-acetyllysine modification is found at Lys16. 2 positions are modified to phosphoserine: Ser52 and Ser77. Glycyl lysine isopeptide (Lys-Gly) (interchain with G-Cter in SUMO2) cross-links involve residues Lys123 and Lys145. Residue Lys174 forms a Glycyl lysine isopeptide (Lys-Gly) (interchain with G-Cter in SUMO1); alternate linkage. Residues Lys174 and Lys177 each participate in a glycyl lysine isopeptide (Lys-Gly) (interchain with G-Cter in SUMO2); alternate cross-link. Lys177 is subject to N6-acetyllysine; alternate.

This sequence belongs to the eukaryotic ribosomal protein eL13 family. In terms of assembly, component of the 60S large ribosomal subunit (LSU).

The protein localises to the cytoplasm. Component of the ribosome, a large ribonucleoprotein complex responsible for the synthesis of proteins in the cell. The small ribosomal subunit (SSU) binds messenger RNAs (mRNAs) and translates the encoded message by selecting cognate aminoacyl-transfer RNA (tRNA) molecules. The large subunit (LSU) contains the ribosomal catalytic site termed the peptidyl transferase center (PTC), which catalyzes the formation of peptide bonds, thereby polymerizing the amino acids delivered by tRNAs into a polypeptide chain. The nascent polypeptides leave the ribosome through a tunnel in the LSU and interact with protein factors that function in enzymatic processing, targeting, and the membrane insertion of nascent chains at the exit of the ribosomal tunnel. As part of the LSU, it is probably required for its formation and the maturation of rRNAs. Plays a role in bone development. This Bos taurus (Bovine) protein is Large ribosomal subunit protein eL13 (RPL13).